The chain runs to 149 residues: Macrodomain Ter protein (149 aa).

It belongs to the MatP family. As to quaternary structure, homodimer.

Its subcellular location is the cytoplasm. In terms of biological role, required for spatial organization of the terminus region of the chromosome (Ter macrodomain) during the cell cycle. Prevents early segregation of duplicated Ter macrodomains during cell division. Binds specifically to matS, which is a 13 bp signature motif repeated within the Ter macrodomain. The polypeptide is Macrodomain Ter protein (Vibrio cholerae serotype O1 (strain ATCC 39315 / El Tor Inaba N16961)).